Consider the following 82-residue polypeptide: Transcription elongation factor 1 homolog (82 aa).

C26, C29, C50, and C53 together coordinate Zn(2+).

Belongs to the ELOF1 family.

The protein resides in the nucleus. Functionally, transcription elongation factor implicated in the maintenance of proper chromatin structure in actively transcribed regions. In Manduca sexta (Tobacco hawkmoth), this protein is Transcription elongation factor 1 homolog.